We begin with the raw amino-acid sequence, 187 residues long: Homeobox protein engrailed-like ceh-16 (187 aa).

3 disordered regions span residues 14–43 (PYPC…NGTP), 60–100 (SDRP…DQLD), and 144–167 (KSTS…HPSI). Positions 20–39 (PTISTPATSPSSISPTFASP) are enriched in low complexity. Positions 87 to 146 (EKRPRTAFTGDQLDRLKTEFRESRYLTEKRRQELAHELGLNESQIKIWFQNKRAKLKKST) form a DNA-binding region, homeobox. Polar residues predominate over residues 145–163 (STSSVPRDRCSSVTPNPHN).

The protein belongs to the engrailed homeobox family. As to expression, expressed in seam cells.

It is found in the nucleus. The protein localises to the cytoplasm. Its function is as follows. Transcriptional regulator which binds to DNA to regulate gene expression and promote seam cell development and differentiation during embryogenesis. Plays a role in maintaining the boundaries between the lateral rows of seam cells and the ventral and dorsal row of epidermal cells during embryonic development. Negatively regulates the expression of the fusion effector protein eff-1 to prevent seam cell fusion with the dorsal and ventral epidermal cells during embryonic elongation. Positively regulates seam cell self-renewal and expansion during the L2 larval stage to promote seam cell development. This role does not seem to be via regulation of eff-1 expression. Specifically, it is required for the asymmetric division of the V5.p seam cell during the L2 larval stage, and in turn the asymmetric nuclear distribution of pop-1 in V5.p daughter cells. The polypeptide is Homeobox protein engrailed-like ceh-16 (Caenorhabditis elegans).